The chain runs to 242 residues: Phosphoribosylaminoimidazole-succinocarboxamide synthase (242 aa).

It belongs to the SAICAR synthetase family.

The catalysed reaction is 5-amino-1-(5-phospho-D-ribosyl)imidazole-4-carboxylate + L-aspartate + ATP = (2S)-2-[5-amino-1-(5-phospho-beta-D-ribosyl)imidazole-4-carboxamido]succinate + ADP + phosphate + 2 H(+). Its pathway is purine metabolism; IMP biosynthesis via de novo pathway; 5-amino-1-(5-phospho-D-ribosyl)imidazole-4-carboxamide from 5-amino-1-(5-phospho-D-ribosyl)imidazole-4-carboxylate: step 1/2. This chain is Phosphoribosylaminoimidazole-succinocarboxamide synthase, found in Cyanothece sp. (strain PCC 7425 / ATCC 29141).